Consider the following 332-residue polypeptide: Ribosomal RNA small subunit methyltransferase C (332 aa).

It belongs to the methyltransferase superfamily. RsmC family. As to quaternary structure, monomer.

It localises to the cytoplasm. It carries out the reaction guanosine(1207) in 16S rRNA + S-adenosyl-L-methionine = N(2)-methylguanosine(1207) in 16S rRNA + S-adenosyl-L-homocysteine + H(+). In terms of biological role, specifically methylates the guanine in position 1207 of 16S rRNA in the 30S particle. This Stutzerimonas stutzeri (strain A1501) (Pseudomonas stutzeri) protein is Ribosomal RNA small subunit methyltransferase C.